The following is a 260-amino-acid chain: Coiled-coil domain-containing protein 172 (260 aa).

Positions 13–194 (SEHQAEESRR…FEDKKHEAIC (182 aa)) form a coiled coil.

This sequence belongs to the CCDC172 family. As to quaternary structure, may interact with TEKT2.

The protein resides in the cytoplasm. Its subcellular location is the cell projection. The protein localises to the cilium. The polypeptide is Coiled-coil domain-containing protein 172 (CCDC172) (Bos taurus (Bovine)).